The sequence spans 181 residues: Large ribosomal subunit protein uL5 (181 aa).

This sequence belongs to the universal ribosomal protein uL5 family. In terms of assembly, part of the 50S ribosomal subunit; part of the 5S rRNA/L5/L18/L25 subcomplex. Contacts the 5S rRNA and the P site tRNA. Forms a bridge to the 30S subunit in the 70S ribosome.

Functionally, this is one of the proteins that bind and probably mediate the attachment of the 5S RNA into the large ribosomal subunit, where it forms part of the central protuberance. In the 70S ribosome it contacts protein S13 of the 30S subunit (bridge B1b), connecting the 2 subunits; this bridge is implicated in subunit movement. Contacts the P site tRNA; the 5S rRNA and some of its associated proteins might help stabilize positioning of ribosome-bound tRNAs. This is Large ribosomal subunit protein uL5 from Helicobacter pylori (strain P12).